The chain runs to 728 residues: Catalase B (728 aa).

The signal sequence occupies residues 1-15 (MRLTFIPSLIGVANA). Residues 16-27 (VCPYMTGELNRR) constitute a propeptide that is removed on maturation. H102 is a catalytic residue. Residue N120 is glycosylated (N-linked (GlcNAc...) asparagine). Residue N175 is part of the active site. Y389 contributes to the heme binding site. N-linked (GlcNAc...) asparagine glycosylation is found at N448 and N551.

This sequence belongs to the catalase family. As to quaternary structure, homotetramer. The cofactor is heme. N-glycosylated.

It is found in the secreted. It carries out the reaction 2 H2O2 = O2 + 2 H2O. Functionally, occurs in almost all aerobically respiring organisms and serves to protect cells from the toxic effects of hydrogen peroxide. The sequence is that of Catalase B (catB) from Aspergillus fumigatus (strain ATCC MYA-4609 / CBS 101355 / FGSC A1100 / Af293) (Neosartorya fumigata).